The primary structure comprises 210 residues: DNA replication complex GINS protein PSF3 (210 aa).

The protein belongs to the GINS3/PSF3 family. In terms of assembly, component of the GINS complex which is a heterotetramer of gins1/psf1, gins2/psf2, gins3/psf3 and gins4/sld5. Component of the CMG helicase complex, composed of the mcm2-7 complex, the GINS complex and cdc45.

The protein localises to the nucleus. It localises to the chromosome. Functionally, required for correct functioning of the GINS complex, a complex that plays an essential role in the initiation of DNA replication, and progression of DNA replication forks. GINS complex is a core component of CDC45-MCM-GINS (CMG) helicase, the molecular machine that unwinds template DNA during replication, and around which the replisome is built. The chain is DNA replication complex GINS protein PSF3 from Xenopus laevis (African clawed frog).